The primary structure comprises 93 residues: Secretoglobin family 3A member 2 (93 aa).

The first 21 residues, 1-21 (MKLVTIFLLVTISLCSYSATA), serve as a signal peptide directing secretion.

Belongs to the secretoglobin family. UGRP subfamily. Homodimer; disulfide-linked. Monomer. Interacts with APOA1. Highly expressed in lung and trachea. Detected throughout the airway epithelium in lung, with slightly higher expression in large airways. Found in lung submucosal gland acinus where it localizes to serous-like cells. Probably expressed in club cells of the bronchioles. Not detected in other tissues tested.

Its subcellular location is the secreted. Functionally, secreted cytokine-like protein. Binds to the scavenger receptor MARCO. Can also bind to pathogens including the Gram-positive bacterium L.monocytogenes, the Gram-negative bacterium P.aeruginosa, and yeast. Strongly inhibits phospholipase A2 (PLA2G1B) activity. Seems to have anti-inflammatory effects in respiratory epithelium. Also has anti-fibrotic activity in lung. May play a role in fetal lung development and maturation. Promotes branching morphogenesis during early stages of lung development. In the pituitary, may inhibit production of follicle-stimulating hormone (FSH) and luteinizing hormone (LH). The sequence is that of Secretoglobin family 3A member 2 (SCGB3A2) from Homo sapiens (Human).